The following is a 576-amino-acid chain: Immunoglobulin mu heavy chain (576 aa).

Position 1 is a pyrrolidone carboxylic acid (Q1). 5 consecutive Ig-like domains span residues 1–97 (QVTL…TYYC), 132–212 (PTLF…EHVC), 236–334 (PKVS…QNAS), 352–442 (PSFA…QTIS), and 452–553 (PDVY…RTVD). Positions 1 to 124 (QVTLTESGPA…VWGKGTTVTV (124 aa)) are variable (V) domain, involved in antigen recognition. Disulfide bonds link C22–C97, C153–C212, and C259–C320. Residues N74 and N170 are each glycosylated (N-linked (GlcNAc...) asparagine). Positions 125–576 (SSGSASAPTL…VMSDTAGTCY (452 aa)) are constant (C) domain. N-linked (GlcNAc...) asparagine glycosylation is found at N332, N395, and N402. 2 cysteine pairs are disulfide-bonded: C367-C426 and C474-C536. N563 carries N-linked (GlcNAc...) asparagine glycosylation.

In terms of assembly, immunoglobulins are composed of two identical heavy chains and two identical light chains; disulfide-linked. It is found almost exclusively as a homopentamer in the serum. Membrane-bound IgM molecules are non-covalently associated with heterodimer of CD79A and CD79B.

The protein localises to the secreted. The protein resides in the cell membrane. In terms of biological role, immunoglobulins, also known as antibodies, are membrane-bound or secreted glycoproteins produced by B lymphocytes. In the recognition phase of humoral immunity, the membrane-bound immunoglobulins serve as receptors which, upon binding of a specific antigen, trigger the clonal expansion and differentiation of B lymphocytes into immunoglobulins-secreting plasma cells. Secreted immunoglobulins mediate the effector phase of humoral immunity, which results in the elimination of bound antigens. The antigen binding site is formed by the variable domain of one heavy chain, together with that of its associated light chain. Thus, each immunoglobulin has two antigen binding sites with remarkable affinity for a particular antigen. The variable domains are assembled by a process called V-(D)-J rearrangement and can then be subjected to somatic hypermutations which, after exposure to antigen and selection, allow affinity maturation for a particular antigen. IgM antibodies play an important role in primary defense mechanisms. They have been shown to be involved in early recognition of external invaders like bacteria and viruses, cellular waste and modified self, as well as in recognition and elimination of precancerous and cancerous lesions. The membrane-bound form is found in the majority of normal B cells alongside with IgD. Membrane-bound IgM induces the phosphorylation of CD79A and CD79B by the Src family of protein tyrosine kinases. It may cause death of cells by apoptosis. It is also found in soluble form, which represents about 30% of the total serum immunoglobulins where it is found almost exclusively as a homopentamer. After the antigen binds to the B cell receptor, the secreted form is secreted in large amounts (, PubMed:16895553). In Homo sapiens (Human), this protein is Immunoglobulin mu heavy chain.